A 437-amino-acid polypeptide reads, in one-letter code: Adenylosuccinate synthetase (437 aa).

Residues 25–31 (GDEGKGK), 53–55 (GHT), and K62 each bind GTP. Residue D26 is the Proton acceptor of the active site. D26 and G53 together coordinate Mg(2+). IMP is bound by residues 26-29 (DEGK) and 51-54 (NAGH). The active-site Proton donor is H54. 4 residues coordinate IMP: T141, R155, N232, and T247. T307 contacts GTP. 307 to 313 (TTTKRPR) contributes to the substrate binding site. R311 contributes to the IMP binding site. Residues R313, 339 to 341 (KLD), and 425 to 427 (GIG) contribute to the GTP site.

It belongs to the adenylosuccinate synthetase family. Homodimer. It depends on Mg(2+) as a cofactor.

The protein resides in the cytoplasm. The catalysed reaction is IMP + L-aspartate + GTP = N(6)-(1,2-dicarboxyethyl)-AMP + GDP + phosphate + 2 H(+). The protein operates within purine metabolism; AMP biosynthesis via de novo pathway; AMP from IMP: step 1/2. Functionally, plays an important role in the salvage pathway for purine nucleotide biosynthesis. Catalyzes the first committed step in the biosynthesis of AMP from IMP. This chain is Adenylosuccinate synthetase, found in Plasmodium vivax (strain Salvador I).